A 419-amino-acid chain; its full sequence is Putative polyketide beta-ketoacyl synthase 2 (419 aa).

Positions 10–413 constitute a Ketosynthase family 3 (KS3) domain; the sequence is TRRTAVTGIG…GSNAALVLRP (404 aa).

This sequence belongs to the thiolase-like superfamily. Beta-ketoacyl-ACP synthases family.

The protein operates within antibiotic biosynthesis; curamycin biosynthesis. The polypeptide is Putative polyketide beta-ketoacyl synthase 2 (curB) (Streptomyces cyaneus (Streptomyces curacoi)).